Consider the following 333-residue polypeptide: Adenosine deaminase (333 aa).

Zn(2+) contacts are provided by histidine 12 and histidine 14. Histidine 14, aspartate 16, and glycine 170 together coordinate substrate. Histidine 197 contacts Zn(2+). The active-site Proton donor is the glutamate 200. Aspartate 278 is a binding site for Zn(2+). Aspartate 279 is a binding site for substrate.

It belongs to the metallo-dependent hydrolases superfamily. Adenosine and AMP deaminases family. Adenosine deaminase subfamily. Requires Zn(2+) as cofactor.

It carries out the reaction adenosine + H2O + H(+) = inosine + NH4(+). It catalyses the reaction 2'-deoxyadenosine + H2O + H(+) = 2'-deoxyinosine + NH4(+). Functionally, catalyzes the hydrolytic deamination of adenosine and 2-deoxyadenosine. The protein is Adenosine deaminase of Proteus mirabilis (strain HI4320).